The primary structure comprises 302 residues: MWFRNLIPYRLRDQVAYDPETADQRLAALAFTPCGALEPSRSGFVPPLGPGAPLVHAAAGSLLFCLQEETKLLPAAVIREAMDERIGAVEAAEHRKVRKRERDRIRDEVVTDLMPRAFSRHKRTWGYLDTEAGYLVVDAGSEKQAEHFVEQLREAWGDLTLSPPETEMGPGTIMTRWLAQQQLPGDLELGEEAVLEDPNAEGCEVRVKRQDLTSEEMRAHIDAGKRVRRLAVTYSERLSAVIDTDLSLRRLKFHDVIREQAGDRDPESQAEQLDADFSLMTLELRTLIPRLMEWFGGEKAPS.

The protein belongs to the RdgC family.

It is found in the cytoplasm. Its subcellular location is the nucleoid. Its function is as follows. May be involved in recombination. The sequence is that of Recombination-associated protein RdgC from Halorhodospira halophila (strain DSM 244 / SL1) (Ectothiorhodospira halophila (strain DSM 244 / SL1)).